The chain runs to 440 residues: MESQQLSQHSPISHGSACASVTSKEVHTNQDPLDVSASKTEECEKASTKANSQQTTTPASSAVPENPHHASPQPASVPPPQNGPYPQQCMMTQNQANPSGWSFYGHPSMIPYTPYQMSPMYFPPGPQSQFPQYPSSVGTPLSTPSPESGNTFTDSSSADSDMTSTKKYVRPPPMLTSPNDFPNWVKTYIKFLQNSNLGGIIPTVNGKPVRQITDDELTFLYNTFQIFAPSQFLPTWVKDILSVDYTDIMKILSKSIEKMQSDTQEANDIVTLANLQYNGSTPADAFETKVTNIIDRLNNNGIHINNKVACQLIMRGLSGEYKFLRYTRHRHLNMTVAELFLDIHAIYEEQQGSRNSKPNYRRNLSDEKNDSRSYTNTTKPKVIARNPQKTNNSKSKTARAHNVSTSNNSPSTDNDSISKSTTEPIQLNNKHDLHLRPGTY.

Polar residues-rich tracts occupy residues 1–23, 48–60, and 127–152; these read MESQ…SVTS, TKAN…TPAS, and QSQF…GNTF. Disordered stretches follow at residues 1 to 93, 126 to 174, and 352 to 440; these read MESQ…MMTQ, PQSQ…PPPM, and GSRN…PGTY. The span at 153-165 shows a compositional bias: low complexity; sequence TDSSSADSDMTST. Residues 299–401 form an RNA-binding region; sequence NNGIHINNKV…NSKSKTARAH (103 aa). A compositionally biased stretch (low complexity) spans 402-418; that stretch reads NVSTSNNSPSTDNDSIS. Phosphoserine is present on Ser-416. Polar residues predominate over residues 419–428; the sequence is KSTTEPIQLN. Positions 429 to 440 are enriched in basic and acidic residues; that stretch reads NKHDLHLRPGTY.

As to quaternary structure, homotrimer.

It is found in the cytoplasm. Its function is as follows. Capsid protein (CA) is the structural component of the virus-like particle (VLP), forming the shell that encapsulates the retrotransposons dimeric RNA genome. The particles are assembled from trimer-clustered units and there are holes in the capsid shells that allow for the diffusion of macromolecules. CA also has nucleocapsid-like chaperone activity, promoting primer tRNA(i)-Met annealing to the multipartite primer-binding site (PBS), dimerization of Ty1 RNA and initiation of reverse transcription. The sequence is that of Transposon Ty1-LR2 Gag polyprotein (TY1A-LR2) from Saccharomyces cerevisiae (strain ATCC 204508 / S288c) (Baker's yeast).